The following is a 309-amino-acid chain: Porphobilinogen deaminase (309 aa).

An S-(dipyrrolylmethanemethyl)cysteine modification is found at Cys-241.

Belongs to the HMBS family. Monomer. The cofactor is dipyrromethane.

The enzyme catalyses 4 porphobilinogen + H2O = hydroxymethylbilane + 4 NH4(+). The protein operates within porphyrin-containing compound metabolism; protoporphyrin-IX biosynthesis; coproporphyrinogen-III from 5-aminolevulinate: step 2/4. In terms of biological role, tetrapolymerization of the monopyrrole PBG into the hydroxymethylbilane pre-uroporphyrinogen in several discrete steps. The protein is Porphobilinogen deaminase of Desulforamulus reducens (strain ATCC BAA-1160 / DSM 100696 / MI-1) (Desulfotomaculum reducens).